The sequence spans 388 residues: Chaperone protein DnaJ (388 aa).

In terms of domain architecture, J spans 5 to 69 (DYYDVLGVDK…QKKAQYDQFG (65 aa)). The segment at 145–227 (GKKTDITYTR…CHGKGTIDKK (83 aa)) adopts a CR-type zinc-finger fold. Zn(2+) contacts are provided by C158, C161, C175, C178, C201, C204, C215, and C218. 4 CXXCXGXG motif repeats span residues 158–165 (CPTCDGSG), 175–182 (CDKCHGTG), 201–208 (CDKCGGRG), and 215–222 (CQTCHGKG).

This sequence belongs to the DnaJ family. In terms of assembly, homodimer. It depends on Zn(2+) as a cofactor.

Its subcellular location is the cytoplasm. Participates actively in the response to hyperosmotic and heat shock by preventing the aggregation of stress-denatured proteins and by disaggregating proteins, also in an autonomous, DnaK-independent fashion. Unfolded proteins bind initially to DnaJ; upon interaction with the DnaJ-bound protein, DnaK hydrolyzes its bound ATP, resulting in the formation of a stable complex. GrpE releases ADP from DnaK; ATP binding to DnaK triggers the release of the substrate protein, thus completing the reaction cycle. Several rounds of ATP-dependent interactions between DnaJ, DnaK and GrpE are required for fully efficient folding. Also involved, together with DnaK and GrpE, in the DNA replication of plasmids through activation of initiation proteins. The sequence is that of Chaperone protein DnaJ from Lactobacillus gasseri (strain ATCC 33323 / DSM 20243 / BCRC 14619 / CIP 102991 / JCM 1131 / KCTC 3163 / NCIMB 11718 / NCTC 13722 / AM63).